We begin with the raw amino-acid sequence, 389 residues long: Probable serine/threonine-protein kinase PBL11 (389 aa).

Residue G2 is the site of N-myristoyl glycine attachment. The S-palmitoyl cysteine moiety is linked to residue C4. Residues 68 to 353 (FRPDSVVGEG…NEIVKTMEEL (286 aa)) form the Protein kinase domain. Residues 74–82 (VGEGGFGCV) and K106 each bind ATP. Y151 is modified (phosphotyrosine). D203 functions as the Proton acceptor in the catalytic mechanism. S207 and S237 each carry phosphoserine. 2 positions are modified to phosphothreonine: T238 and T243. Residue Y251 is modified to Phosphotyrosine.

The protein belongs to the protein kinase superfamily. Ser/Thr protein kinase family. As to expression, roots, leaves and stems.

It is found in the cell membrane. The catalysed reaction is L-seryl-[protein] + ATP = O-phospho-L-seryl-[protein] + ADP + H(+). It catalyses the reaction L-threonyl-[protein] + ATP = O-phospho-L-threonyl-[protein] + ADP + H(+). In terms of biological role, may play a role in the regulation of plant growth and development. May be involved in plant defense signaling. The protein is Probable serine/threonine-protein kinase PBL11 of Arabidopsis thaliana (Mouse-ear cress).